Reading from the N-terminus, the 440-residue chain is Inner membrane metabolite transport protein YhjE (440 aa).

Over 1–34 (MQATATTLDHEQEYTPINSRNKVLVASLIGTAIE) the chain is Cytoplasmic. A helical transmembrane segment spans residues 35 to 55 (FFDFYIYATAAVIVFPHIFFP). The Periplasmic portion of the chain corresponds to 56–66 (QGDPTAATLQS). Residues 67-87 (LATFAIAFVARPIGSAVFGHF) form a helical membrane-spanning segment. Topologically, residues 88-108 (GDRVGRKATLVASLLTMGIST) are cytoplasmic. The next 2 membrane-spanning stretches (helical) occupy residues 109 to 129 (VVIG…LLLA) and 130 to 150 (LARF…ALLA). Residues 151 to 167 (TENAPPRKRALYGSFPQ) lie on the Cytoplasmic side of the membrane. Residues 168 to 188 (LGAPIGFFFANGTFLLLSWLL) traverse the membrane as a helical segment. Over 189–192 (TDEQ) the chain is Periplasmic. The helical transmembrane segment at 193–213 (FMSWGWRVPFIFSAVLVIIGL) threads the bilayer. Over 214-248 (YVRVSLHESPVFEKVAKAKKQVKIPLGTLLTKHVR) the chain is Cytoplasmic. Residues 249-269 (VTVLGTFIMLATYTLFYIMTV) form a helical membrane-spanning segment. Residues 270 to 289 (YSMTFSTAAAPVGLGLPRNE) are Periplasmic-facing. Residues 290–310 (VLWMLMMAVIGFGVMVPVAGL) form a helical membrane-spanning segment. The Cytoplasmic portion of the chain corresponds to 311–320 (LADAFGRRKS). A helical membrane pass occupies residues 321-341 (MVIITTLIILFALFAFNPLLG). Over 342-345 (SGNP) the chain is Periplasmic. Residues 346–366 (ILVFAFLLLGLSLMGLTFGPM) form a helical membrane-spanning segment. The Cytoplasmic segment spans residues 367 to 384 (GALLPELFPTEVRYTGAS). A helical membrane pass occupies residues 385–405 (FSYNVASILGASVAPYIAAWL). Topologically, residues 406–410 (QTNYG) are periplasmic. A helical transmembrane segment spans residues 411 to 431 (LGAVGLYLAAMAGLTLIALLL). Over 432 to 440 (THETRHQSL) the chain is Cytoplasmic.

The protein belongs to the major facilitator superfamily. Metabolite:H+ Symporter (MHS) family (TC 2.A.1.6) family.

The protein localises to the cell inner membrane. This is Inner membrane metabolite transport protein YhjE (yhjE) from Escherichia coli (strain K12).